Consider the following 38-residue polypeptide: Large ribosomal subunit protein bL36 (38 aa).

This sequence belongs to the bacterial ribosomal protein bL36 family.

The protein is Large ribosomal subunit protein bL36 of Ectopseudomonas mendocina (strain ymp) (Pseudomonas mendocina).